A 177-amino-acid polypeptide reads, in one-letter code: Peptide methionine sulfoxide reductase MsrA 2 (177 aa).

Cysteine 12 is an active-site residue.

It belongs to the MsrA Met sulfoxide reductase family.

The enzyme catalyses L-methionyl-[protein] + [thioredoxin]-disulfide + H2O = L-methionyl-(S)-S-oxide-[protein] + [thioredoxin]-dithiol. The catalysed reaction is [thioredoxin]-disulfide + L-methionine + H2O = L-methionine (S)-S-oxide + [thioredoxin]-dithiol. Functionally, has an important function as a repair enzyme for proteins that have been inactivated by oxidation. Catalyzes the reversible oxidation-reduction of methionine sulfoxide in proteins to methionine. The polypeptide is Peptide methionine sulfoxide reductase MsrA 2 (msrA2) (Staphylococcus aureus (strain NCTC 8325 / PS 47)).